We begin with the raw amino-acid sequence, 458 residues long: Argininosuccinate lyase (458 aa).

This sequence belongs to the lyase 1 family. Argininosuccinate lyase subfamily.

The protein localises to the cytoplasm. It catalyses the reaction 2-(N(omega)-L-arginino)succinate = fumarate + L-arginine. It functions in the pathway amino-acid biosynthesis; L-arginine biosynthesis; L-arginine from L-ornithine and carbamoyl phosphate: step 3/3. The polypeptide is Argininosuccinate lyase (Salmonella schwarzengrund (strain CVM19633)).